Reading from the N-terminus, the 453-residue chain is Nuclear distribution protein PAC1-2 (453 aa).

In terms of domain architecture, LisH spans 9–41; the sequence is QADELHKSIVAYLTANNLSTTAATLREELSLGE. A coiled-coil region spans residues 63-87; the sequence is VVRLQKKVMDLESRSVALQSELEHS. The tract at residues 84–108 is disordered; the sequence is LEHSTPASLSKRKDPTSWLPRSPPR. WD repeat units follow at residues 113–154, 156–196, 200–243, 246–285, 290–350, 352–391, and 396–448; these read SHQA…RTLK, HTRA…KNTR, GHDH…CIKT, GHTG…PESK, GHEN…IKTL, GHDN…RCVK, and AHGQ…DKVV.

It belongs to the WD repeat LIS1/nudF family. In terms of assembly, self-associates. Interacts with NDL1 and dynein.

It is found in the cytoplasm. It localises to the cytoskeleton. The protein resides in the spindle pole. Its function is as follows. Positively regulates the activity of the minus-end directed microtubule motor protein dynein. May enhance dynein-mediated microtubule sliding by targeting dynein to the microtubule plus end. Required for nuclear migration during vegetative growth as well as development. Required for retrograde early endosome (EE) transport from the hyphal tip. Required for localization of dynein to the mitotic spindle poles. Recruits additional proteins to the dynein complex at SPBs. The polypeptide is Nuclear distribution protein PAC1-2 (Chaetomium globosum (strain ATCC 6205 / CBS 148.51 / DSM 1962 / NBRC 6347 / NRRL 1970) (Soil fungus)).